The sequence spans 251 residues: HTH-type transcriptional regulator UlaR (251 aa).

In terms of domain architecture, HTH deoR-type spans 3–58 (EAQRHQILLEMLAQLGFVTVEKVVERLGISPATARRDINKLDESGKLKKVRNGAEA). The H-T-H motif DNA-binding region spans 20 to 39 (VTVEKVVERLGISPATARRD).

The protein localises to the cytoplasm. Functionally, represses ulaG and the ulaABCDEF operon. The protein is HTH-type transcriptional regulator UlaR of Escherichia coli O139:H28 (strain E24377A / ETEC).